The sequence spans 308 residues: Barttin (308 aa).

Residues 1–5 (MADEK) are Cytoplasmic-facing. The interval 1–72 (MADEKTFRIG…VPADSDFQGM (72 aa)) is regulates channel membrane trafficking and anion conductance. The chain crosses the membrane as a helical span at residues 6–26 (TFRIGFIVLGLFLLSLGTFLM). Over 27–32 (SHDRPQ) the chain is Extracellular. Residues 33 to 53 (VYGTFYAMGSIMVIGGVLWSM) traverse the membrane as a helical segment. Residues cysteine 54 and cysteine 56 are each lipidated (S-palmitoyl cysteine). At 54-308 (CQCYPKITFV…ELGFEPDVQG (255 aa)) the chain is on the cytoplasmic side. Phosphoserine is present on residues serine 79 and serine 107. 2 disordered regions span residues 127–149 (PLLA…HSAQ) and 162–308 (LDEK…DVQG). The span at 162–171 (LDEKEGEKSR) shows a compositional bias: basic and acidic residues. The span at 172–183 (SQSSPPACSQGS) shows a compositional bias: polar residues. Positions 274–283 (EEPEQEEEDL) are enriched in acidic residues. Serine 290 is subject to Phosphoserine.

As to quaternary structure, interacts with CLCNK channels. Forms heteromers with CLCNKA in the thin ascending limb of Henle and with CLCNKB in the thick ascending limb and more distal segments. Post-translationally, palmitoylation is necessary for activation of plasma membrane-inserted CLC-K/barttin channels. As to expression, expressed along the distal nephron.

The protein localises to the basolateral cell membrane. Functionally, regulatory subunit of anion-selective CLCNKA:BSND and CLCNKB:BSND heteromeric channels involved in basolateral chloride conductance along the nephron to achieve urine concentration and maintain systemic acid-base homeostasis, and in the stria vascularis of the inner ear to establish the endocochlear potential necessary for normal hearing. Most likely acts as a chaperone that allosterically regulates proper sorting of CLCNKA:BSND and CLCNKB:BSND channels at the basolateral plasma membrane domain and functional switch to ion conducting state. Mediates constitutive opening of channel common gates. This chain is Barttin, found in Rattus norvegicus (Rat).